The primary structure comprises 234 residues: UPF0173 metal-dependent hydrolase Meso_1362 (234 aa).

This sequence belongs to the UPF0173 family.

The protein is UPF0173 metal-dependent hydrolase Meso_1362 of Chelativorans sp. (strain BNC1).